Consider the following 134-residue polypeptide: Profilin-2 (134 aa).

The cysteines at positions 13 and 118 are disulfide-linked. The Involved in PIP2 interaction signature appears at 84 to 100 (AVIRGKKGSGGITIKKT). Threonine 114 bears the Phosphothreonine mark.

It belongs to the profilin family. As to quaternary structure, occurs in many kinds of cells as a complex with monomeric actin in a 1:1 ratio. In terms of processing, phosphorylated by MAP kinases.

The protein localises to the cytoplasm. Its subcellular location is the cytoskeleton. Binds to actin and affects the structure of the cytoskeleton. At high concentrations, profilin prevents the polymerization of actin, whereas it enhances it at low concentrations. The chain is Profilin-2 from Olea europaea (Common olive).